We begin with the raw amino-acid sequence, 554 residues long: MSYNQNYNQDFNNNSYGSYGNSYNNNSYGQNNYGGSYGGNSYGGGRGGSRGGFRGGRGGGFGGRRVDERVELTTPEWDLDSLPKFEKNFYSEHPDVSARSESEVQSFRKEHDMKCVGTDIPKPITSFDEAGFPDYVLNEVKQQGFPKPTAIQCQGWPMALSGRDMIGIAATGSGKTLSYCLPSIVHINAQPLLGPGDGPIVLVLAPTRELAVQIQQECSKFGASSRIRNTCIYGGAPKGQQIRDLARGVEICIATPGRLIDMLETGKTNLRRVTYLVLDEADRMLDMGFEPQIRKIVDQIRPDRQTLMWSATWPKEVQTLTRDYLNDPIQVTIGSLELAASHTITQIVEVLSEFEKRDRLVKHLETATADKEAKVLIFSSTKRACDEITSYLRADGWPALAIHGDKQQNERDWVLREFKTGKSPIMVATDVAARGIDVKGISYVINYDMPGNIEDYVHRIGRTGRAGTTGTAVSLFTEANSKLGGDLCKIMREANQTVPPELLRYDRRSFGSHIRYGRGGGRGGWGGRGRGGRGRGRGGFQSGSNGAPMGNRRF.

The short motif at 125 to 153 (TSFDEAGFPDYVLNEVKQQGFPKPTAIQC) is the Q motif element. The region spanning 156-331 (WPMALSGRDM…RDYLNDPIQV (176 aa)) is the Helicase ATP-binding domain. 169–176 (AATGSGKT) lines the ATP pocket. Positions 279 to 282 (DEAD) match the DEAD box motif. A Helicase C-terminal domain is found at 346–506 (QIVEVLSEFE…TVPPELLRYD (161 aa)). Residues 521–554 (GRGGWGGRGRGGRGRGRGGFQSGSNGAPMGNRRF) are disordered.

This sequence belongs to the DEAD box helicase family. DDX5/DBP2 subfamily. Associates with polysomes.

It localises to the cytoplasm. It is found in the nucleus. It carries out the reaction ATP + H2O = ADP + phosphate + H(+). Its function is as follows. ATP-dependent RNA helicase involved nonsense-mediated mRNA decay and ribosome biogenesis through rRNA processing. This chain is ATP-dependent RNA helicase DBP2 (DBP2), found in Meyerozyma guilliermondii (strain ATCC 6260 / CBS 566 / DSM 6381 / JCM 1539 / NBRC 10279 / NRRL Y-324) (Yeast).